A 490-amino-acid chain; its full sequence is Ribulose bisphosphate carboxylase large chain (490 aa).

Substrate contacts are provided by N127 and T177. K179 functions as the Proton acceptor in the catalytic mechanism. Position 181 (K181) interacts with substrate. Mg(2+)-binding residues include K205, D207, and E208. K205 is modified (N6-carboxylysine). H297 acts as the Proton acceptor in catalysis. The substrate site is built by R298, H330, and S382.

This sequence belongs to the RuBisCO large chain family. Type I subfamily. Heterohexadecamer of 8 large chains and 8 small chains. Mg(2+) is required as a cofactor.

The protein localises to the plastid. It is found in the chloroplast. The catalysed reaction is 2 (2R)-3-phosphoglycerate + 2 H(+) = D-ribulose 1,5-bisphosphate + CO2 + H2O. It catalyses the reaction D-ribulose 1,5-bisphosphate + O2 = 2-phosphoglycolate + (2R)-3-phosphoglycerate + 2 H(+). Functionally, ruBisCO catalyzes two reactions: the carboxylation of D-ribulose 1,5-bisphosphate, the primary event in carbon dioxide fixation, as well as the oxidative fragmentation of the pentose substrate in the photorespiration process. Both reactions occur simultaneously and in competition at the same active site. In Thalassiosira nordenskioeldii (Marine diatom), this protein is Ribulose bisphosphate carboxylase large chain.